Here is a 159-residue protein sequence, read N- to C-terminus: 6,7-dimethyl-8-ribityllumazine synthase (159 aa).

5-amino-6-(D-ribitylamino)uracil contacts are provided by residues Trp27, Ser62–Glu64, and Val86–Ile88. Ser91–Thr92 provides a ligand contact to (2S)-2-hydroxy-3-oxobutyl phosphate. Residue His94 is the Proton donor of the active site. Leu119 is a binding site for 5-amino-6-(D-ribitylamino)uracil. Position 133 (Arg133) interacts with (2S)-2-hydroxy-3-oxobutyl phosphate.

Homopentamer.

The enzyme catalyses (2S)-2-hydroxy-3-oxobutyl phosphate + 5-amino-6-(D-ribitylamino)uracil = 6,7-dimethyl-8-(1-D-ribityl)lumazine + phosphate + 2 H2O + H(+). It functions in the pathway cofactor biosynthesis; riboflavin biosynthesis; riboflavin from 2-hydroxy-3-oxobutyl phosphate and 5-amino-6-(D-ribitylamino)uracil: step 1/2. With respect to regulation, competitively inhibited by riboflavin (Ki of 17 uM). Functionally, catalyzes the formation of 6,7-dimethyl-8-ribityllumazine by condensation of 5-amino-6-(D-ribitylamino)uracil with 3,4-dihydroxy-2-butanone 4-phosphate. This is the penultimate step in the biosynthesis of riboflavin. Also binds riboflavin with an unexpected high affinity. The chain is 6,7-dimethyl-8-ribityllumazine synthase (rib4) from Schizosaccharomyces pombe (strain 972 / ATCC 24843) (Fission yeast).